Here is a 317-residue protein sequence, read N- to C-terminus: Melanocyte-stimulating hormone receptor (317 aa).

Topologically, residues 1 to 37 (MPIHGAPRKLLGSLNSTPTATPKLGLAANHTGAPCLE) are extracellular. An N-linked (GlcNAc...) asparagine glycan is attached at Asn29. A helical membrane pass occupies residues 38-63 (VSIPDGLFLSLGLVSLVENVLVVAAI). At 64-72 (AKNRNLHSP) the chain is on the cytoplasmic side. Residues 73-93 (MYCFICCLALSDLLVSGSNML) traverse the membrane as a helical segment. Over 94–118 (EMAVVLLLEGGALATRASVVQQLHN) the chain is Extracellular. A helical transmembrane segment spans residues 119–140 (TIDVLTCSSMLCSLCFLGAIAV). At 141–163 (DRHISIFYALRYHSIMTLPRAQR) the chain is on the cytoplasmic side. A helical transmembrane segment spans residues 164–183 (VIAAIWVASILSSTLFITYY). Over 184-191 (DHAAVLLC) the chain is Extracellular. Residues 192 to 211 (LVVFFLAMLVLMAVLYVHML) traverse the membrane as a helical segment. Residues 212-240 (ARACQHAQGITRLHKRQPPAHQGFGLRGA) are Cytoplasmic-facing. The chain crosses the membrane as a helical span at residues 241–266 (ATLTILLGIFFLCWGPFFLHLKLVVF). At 267 to 279 (CPQHLTCSCIFKN) the chain is on the extracellular side. Residues 280 to 300 (FKVFLTLIICNTIIDPLIYAF) traverse the membrane as a helical segment. The Cytoplasmic portion of the chain corresponds to 301-317 (RSQELRRTLKEVLLCSW). A lipid anchor (S-palmitoyl cysteine) is attached at Cys315.

It belongs to the G-protein coupled receptor 1 family. As to quaternary structure, interacts with MGRN1, but does not undergo MGRN1-mediated ubiquitination; this interaction competes with GNAS-binding and thus inhibits agonist-induced cAMP production. Interacts with OPN3; the interaction results in a decrease in MC1R-mediated cAMP signaling and ultimately a decrease in melanin production in melanocytes.

It is found in the cell membrane. Its function is as follows. Receptor for MSH (alpha, beta and gamma) and ACTH. The activity of this receptor is mediated by G proteins which activate adenylate cyclase. Mediates melanogenesis, the production of eumelanin (black/brown) and phaeomelanin (red/yellow), via regulation of cAMP signaling in melanocytes. This Saimiri oerstedii (Central American squirrel monkey) protein is Melanocyte-stimulating hormone receptor (MC1R).